A 202-amino-acid chain; its full sequence is Secreted RxLR effector protein 11 (202 aa).

The signal sequence occupies residues 1-23 (MRLNFTKLFAGAVALAWTTESMA). A RxLR-dEER motif is present at residues 49–61 (RRLRTINGADEER).

Belongs to the RxLR effector family.

The protein resides in the secreted. Its subcellular location is the host cytoplasm. The protein localises to the host nucleus. In terms of biological role, effector that acts as a broad suppressor of cell death to interrupt plant immunity. Inhibits cell death induced by cell death-inducing proteins, including the PAMP elicitor INF1 from P.infestans. The polypeptide is Secreted RxLR effector protein 11 (Plasmopara viticola (Downy mildew of grapevine)).